The sequence spans 363 residues: Galactokinase (363 aa).

16–19 lines the substrate pocket; sequence EHTD. ATP is bound by residues Ser50 and 103–109; that span reads GSGLSSS. The Mg(2+) site is built by Ser109 and Glu141. The Proton acceptor role is filled by Asp153. Tyr205 provides a ligand contact to substrate.

It belongs to the GHMP kinase family. GalK subfamily.

The protein resides in the cytoplasm. It catalyses the reaction alpha-D-galactose + ATP = alpha-D-galactose 1-phosphate + ADP + H(+). The protein operates within carbohydrate metabolism; galactose metabolism. Catalyzes the transfer of the gamma-phosphate of ATP to D-galactose to form alpha-D-galactose-1-phosphate (Gal-1-P). The protein is Galactokinase of Mycobacterium bovis (strain ATCC BAA-935 / AF2122/97).